The primary structure comprises 353 residues: Methylthioribose-1-phosphate isomerase (353 aa).

Substrate contacts are provided by residues 51 to 53 (RGA), arginine 94, and glutamine 199. Residue aspartate 240 is the Proton donor of the active site. 250-251 (NK) contacts substrate.

The protein belongs to the eIF-2B alpha/beta/delta subunits family. MtnA subfamily. In terms of assembly, homodimer.

It catalyses the reaction 5-(methylsulfanyl)-alpha-D-ribose 1-phosphate = 5-(methylsulfanyl)-D-ribulose 1-phosphate. It participates in amino-acid biosynthesis; L-methionine biosynthesis via salvage pathway; L-methionine from S-methyl-5-thio-alpha-D-ribose 1-phosphate: step 1/6. Its function is as follows. Catalyzes the interconversion of methylthioribose-1-phosphate (MTR-1-P) into methylthioribulose-1-phosphate (MTRu-1-P). This chain is Methylthioribose-1-phosphate isomerase, found in Bacillus licheniformis (strain ATCC 14580 / DSM 13 / JCM 2505 / CCUG 7422 / NBRC 12200 / NCIMB 9375 / NCTC 10341 / NRRL NRS-1264 / Gibson 46).